A 300-amino-acid polypeptide reads, in one-letter code: Peroxisomal 2,4-dienoyl-CoA reductase [(3E)-enoyl-CoA-producing] (300 aa).

Residues 42 to 47, 67 to 71, and aspartate 93 contribute to the NADP(+) site; these read GGGSGI and RNLEK. Residue arginine 67 participates in substrate binding. Residues arginine 95, phenylalanine 125, and 133–135 each bind substrate; that span reads SFN. NADP(+)-binding positions include lysine 189 and 215–221; that span reads PGPISGT. Arginine 226 serves as a coordination point for substrate. Positions 298 to 300 match the Microbody targeting signal motif; the sequence is AKL.

This sequence belongs to the short-chain dehydrogenases/reductases (SDR) family. 2,4-dienoyl-CoA reductase subfamily. Monomer, dimer and oligomer.

The protein localises to the peroxisome. It catalyses the reaction a (2E,4Z)-dienoyl-CoA + NADPH + H(+) = a 4,5-saturated-(3E)-enoyl-CoA + NADP(+). The catalysed reaction is a (2E,4E)-dienoyl-CoA + NADPH + H(+) = a 4,5-saturated-(3E)-enoyl-CoA + NADP(+). The enzyme catalyses (2E,4E)-hexadienoyl-CoA + NADPH + H(+) = (3E)-hexenoyl-CoA + NADP(+). It carries out the reaction (2E,4E)-decadienoyl-CoA + NADPH + H(+) = (3E)-decenoyl-CoA + NADP(+). It catalyses the reaction (2E,4Z,7Z,10Z,13Z,16Z,19Z)-docosaheptaenoyl-CoA + NADPH + H(+) = (3E,7Z,10Z,13Z,16Z,19Z)-docosahexaenoyl-CoA + NADP(+). In terms of biological role, auxiliary enzyme of beta-oxidation. Participates in the degradation of unsaturated fatty enoyl-CoA esters having double bonds in both even- and odd-numbered positions in peroxisome. Catalyzes the NADP-dependent reduction of 2,4-dienoyl-CoA to yield trans-3-enoyl-CoA. The chain is Peroxisomal 2,4-dienoyl-CoA reductase [(3E)-enoyl-CoA-producing] (decr2) from Danio rerio (Zebrafish).